Consider the following 324-residue polypeptide: DNA repair and recombination protein RadA (324 aa).

114–121 (GEFGSGKT) contacts ATP.

It belongs to the eukaryotic RecA-like protein family.

In terms of biological role, involved in DNA repair and in homologous recombination. Binds and assemble on single-stranded DNA to form a nucleoprotein filament. Hydrolyzes ATP in a ssDNA-dependent manner and promotes DNA strand exchange between homologous DNA molecules. The protein is DNA repair and recombination protein RadA of Metallosphaera sedula (strain ATCC 51363 / DSM 5348 / JCM 9185 / NBRC 15509 / TH2).